Consider the following 163-residue polypeptide: Retinoic acid receptor responder protein 2 (163 aa).

Residues 1–20 (MRRLLIPLALWLGAVGVGVA) form the signal peptide. 3 disulfide bridges follow: Cys-77–Cys-87, Cys-98–Cys-117, and Cys-101–Cys-135. Positions 158–163 (KALPRS) are excised as a propeptide.

Secreted in an inactive precursor form, prochemerin, which is proteolytically processed by a variety of extracellular proteases to generate forms with differing levels of bioactivity. For example, the removal of six amino acids results in chemerin-157, which exhibits the highest activity, while removal of seven amino acids results in chemerin-156 which has slightly less activity. Some proteases are able to cleave at more than one site and chemerin forms may be sequentially processed by different enzymes to modulate activity levels. The coordinated expression and activity of chemerin-modifying enzymes is essential for regulating its bioactivation, inactivation and, consequently, biological function. Cathepsin G cleaves seven C-terminal amino acids from prochemerin (chemerin-156), elastase is able to cleave six (chemerin-157), eight (chemerin-155) or eleven (chemerin-152), plasmin cleaves five amino acids (chemerin-158), and tryptase cleaves five (chemerin-158) or eight (chemerin-155). Multiple cleavages might be required to fully activate chemerin, with an initial tryptase cleavage resulting in chemerin with low activity (chemerin-158), and a second cleavage by carboxypeptidase N or B producing highly active chemerin (chemerin-157).

It is found in the secreted. In terms of biological role, adipocyte-secreted protein (adipokine) that regulates adipogenesis, metabolism and inflammation through activation of the chemokine-like receptor 1 (CMKLR1). Also acts as a ligand for CMKLR2. Can also bind to C-C chemokine receptor-like 2 (CCRL2), but with a lower affinity than it does to CMKLR1 or CMKLR2. Positively regulates adipocyte differentiation, modulates the expression of adipocyte genes involved in lipid and glucose metabolism and might play a role in angiogenesis, a process essential for the expansion of white adipose tissue. Also acts as a pro-inflammatory adipokine, causing an increase in secretion of pro-inflammatory and prodiabetic adipokines, which further impair adipose tissue metabolic function and have negative systemic effects including impaired insulin sensitivity, altered glucose and lipid metabolism, and a decrease in vascular function in other tissues. Can have both pro- and anti-inflammatory properties depending on the modality of enzymatic cleavage by different classes of proteases. Acts as a chemotactic factor for leukocyte populations expressing CMKLR1, particularly immature plasmacytoid dendritic cells, but also immature myeloid DCs, macrophages and natural killer cells. Exerts an anti-inflammatory role by preventing TNF/TNFA-induced VCAM1 expression and monocytes adhesion in vascular endothelial cells. The effect is mediated via inhibiting activation of NF-kappa-B and CRK/p38 through stimulation of AKT1/NOS3 signaling and nitric oxide production. Exhibits an antimicrobial function in the skin. The chain is Retinoic acid receptor responder protein 2 (RARRES2) from Pongo abelii (Sumatran orangutan).